The sequence spans 1028 residues: Contactin-6 (1028 aa).

The first 19 residues, 1–19, serve as a signal peptide directing secretion; sequence MRLLWKLVILLPLINSSAG. 6 Ig-like C2-type domains span residues 26–117, 122–208, 227–308, 318–402, 408–495, and 499–587; these read PIFT…AKLQ, EDFE…RSVQ, PKIE…RNLA, PEWE…AELR, PDFS…GSLI, and RTVI…ESLS. 6 cysteine pairs are disulfide-bonded: cysteine 50/cysteine 100, cysteine 144/cysteine 196, cysteine 249/cysteine 297, cysteine 339/cysteine 386, cysteine 431/cysteine 479, and cysteine 521/cysteine 577. N-linked (GlcNAc...) asparagine glycosylation is found at asparagine 65 and asparagine 193. N-linked (GlcNAc...) asparagine glycans are attached at residues asparagine 368, asparagine 377, and asparagine 468. Fibronectin type-III domains are found at residues 600–698, 703–800, 805–901, and 902–996; these read PPED…TKAS, APVN…SGED, APRG…TKKS, and PPSQ…KMSS. N-linked (GlcNAc...) asparagine glycosylation is found at asparagine 659, asparagine 765, asparagine 860, and asparagine 865. Position 882 is a phosphotyrosine (tyrosine 882). Over residues 887 to 902 the composition is skewed to polar residues; sequence TGPSSPPVNVTTKKSP. Positions 887 to 908 are disordered; sequence TGPSSPPVNVTTKKSPPSQPPA. N-linked (GlcNAc...) asparagine glycans are attached at residues asparagine 895, asparagine 931, asparagine 956, and asparagine 957. Residue serine 999 is the site of GPI-anchor amidated serine attachment. Positions 1000–1028 are cleaved as a propeptide — removed in mature form; that stretch reads RGIQFLEPSTHFLSIVIVIFHCFAIQPLI.

Belongs to the immunoglobulin superfamily. Contactin family. Interacts with PTPRG. In terms of tissue distribution, expressed in nervous system. Highly expressed in cerebellum. Expressed at intermediate level in thalamus, subthalamic nucleus. Weakly expressed in corpus callosum, caudate nucleus and spinal cord.

Its subcellular location is the cell membrane. Functionally, contactins mediate cell surface interactions during nervous system development. Participates in oligodendrocytes generation by acting as a ligand of NOTCH1. Its association with NOTCH1 promotes NOTCH1 activation through the released notch intracellular domain (NICD) and subsequent translocation to the nucleus. Involved in motor coordination. This chain is Contactin-6 (CNTN6), found in Homo sapiens (Human).